We begin with the raw amino-acid sequence, 386 residues long: 2,3-diketo-5-methylthiopentyl-1-phosphate enolase (386 aa).

The Proton acceptor role is filled by Lys-85. Substrate-binding positions include Lys-131, 157–160, His-248, Gly-316, and 338–339; these read KDDE and GT. Mg(2+) is bound by residues Lys-157, Asp-159, and Glu-160. An N6-carboxylysine modification is found at Lys-157.

It belongs to the RuBisCO large chain family. Type IV subfamily. In terms of assembly, homodimer. It depends on Mg(2+) as a cofactor.

The enzyme catalyses 5-methylsulfanyl-2,3-dioxopentyl phosphate = 2-hydroxy-5-methylsulfanyl-3-oxopent-1-enyl phosphate. Its pathway is amino-acid biosynthesis; L-methionine biosynthesis via salvage pathway; L-methionine from S-methyl-5-thio-alpha-D-ribose 1-phosphate: step 3/6. Functionally, catalyzes the enolization of 2,3-diketo-5-methylthiopentyl-1-phosphate (DK-MTP-1-P) into 2-hydroxy-3-keto-5-methylthiopentenyl-1-phosphate (HK-MTPenyl-1-P). In Microcystis aeruginosa (strain NIES-843 / IAM M-2473), this protein is 2,3-diketo-5-methylthiopentyl-1-phosphate enolase.